The sequence spans 129 residues: Profilin-4 (129 aa).

This sequence belongs to the profilin family.

The protein localises to the cytoplasm. In terms of biological role, involved in male fertility. Required for manchette development and acrosome biogenesis during spermiogenesis. Binds in vitro to phospholipids, including phosphatidylinositol 3-phosphate (PtdIns(3)P), phosphatidylinositol 4,5-bisphosphate (PtdIns(4,5)P2), phosphatidylinositol 4-phosphate (PtdIns(4)P) and phosphatidic acid (PA). Contrary to other profilin family members, does not bind to actin in vitro. The sequence is that of Profilin-4 (PFN4) from Bos taurus (Bovine).